We begin with the raw amino-acid sequence, 188 residues long: Pyridoxal 5'-phosphate synthase subunit PdxT (188 aa).

Position 46–48 (46–48 (GES)) interacts with L-glutamine. Cys78 acts as the Nucleophile in catalysis. L-glutamine contacts are provided by residues Arg105 and 133–134 (IR). Active-site charge relay system residues include His169 and Glu171.

Belongs to the glutaminase PdxT/SNO family. As to quaternary structure, in the presence of PdxS, forms a dodecamer of heterodimers. Only shows activity in the heterodimer.

The catalysed reaction is aldehydo-D-ribose 5-phosphate + D-glyceraldehyde 3-phosphate + L-glutamine = pyridoxal 5'-phosphate + L-glutamate + phosphate + 3 H2O + H(+). It catalyses the reaction L-glutamine + H2O = L-glutamate + NH4(+). It functions in the pathway cofactor biosynthesis; pyridoxal 5'-phosphate biosynthesis. Catalyzes the hydrolysis of glutamine to glutamate and ammonia as part of the biosynthesis of pyridoxal 5'-phosphate. The resulting ammonia molecule is channeled to the active site of PdxS. This chain is Pyridoxal 5'-phosphate synthase subunit PdxT, found in Thermosipho africanus (strain TCF52B).